A 148-amino-acid polypeptide reads, in one-letter code: Macrodomain Ter protein (148 aa).

The protein belongs to the MatP family. In terms of assembly, homodimer.

It localises to the cytoplasm. Required for spatial organization of the terminus region of the chromosome (Ter macrodomain) during the cell cycle. Prevents early segregation of duplicated Ter macrodomains during cell division. Binds specifically to matS, which is a 13 bp signature motif repeated within the Ter macrodomain. This Haemophilus influenzae (strain PittGG) protein is Macrodomain Ter protein.